A 496-amino-acid polypeptide reads, in one-letter code: Glycerol kinase (496 aa).

T12 is an ADP binding site. ATP-binding residues include T12, T13, and S14. Residue T12 coordinates sn-glycerol 3-phosphate. R16 provides a ligand contact to ADP. R82, E83, and Y134 together coordinate sn-glycerol 3-phosphate. Glycerol-binding residues include R82, E83, and Y134. At H230 the chain carries Phosphohistidine; by HPr. D244 is a sn-glycerol 3-phosphate binding site. The glycerol site is built by D244 and Q245. Residues T266 and G309 each coordinate ADP. Residues T266, G309, Q313, and G410 each contribute to the ATP site. Residues G410 and N414 each contribute to the ADP site.

The protein belongs to the FGGY kinase family. In terms of assembly, homotetramer and homodimer (in equilibrium). Post-translationally, the phosphoenolpyruvate-dependent sugar phosphotransferase system (PTS), including enzyme I, and histidine-containing protein (HPr) are required for the phosphorylation, which leads to the activation of the enzyme.

The enzyme catalyses glycerol + ATP = sn-glycerol 3-phosphate + ADP + H(+). The protein operates within polyol metabolism; glycerol degradation via glycerol kinase pathway; sn-glycerol 3-phosphate from glycerol: step 1/1. Activated by phosphorylation and inhibited by fructose 1,6-bisphosphate (FBP). Functionally, key enzyme in the regulation of glycerol uptake and metabolism. Catalyzes the phosphorylation of glycerol to yield sn-glycerol 3-phosphate. This chain is Glycerol kinase, found in Bacillus anthracis (strain A0248).